Reading from the N-terminus, the 285-residue chain is MPVDMAVQLYITSSPPLHHRFLSSYKDYRVRNLISVNCKPLRPCINTKNTHNTSLNPPCSVWKAPEPKAKKKVVFADSKGMSLTAVRVFSPCENKKSDSQVQFQLPKLEVALKPVQSRILAFRQPATEYMEFRKRLMKNSVCLESCTLQGHTLTGTIKVRNVSFEKSVQVRITFDSWENHRDIECTFLNDVCGCRDTDTFSFIIEIPACVLPQDSVEFCVSYTCGGKTHWDNNNGKNYALVTTHDEKKDKTKETDLLDPFRNQQKRNRFTADWNSLMIGIRGPTW.

A PP1-binding motif motif is present at residues 72-75 (KVVF). The CBM21 domain maps to 133–241 (RKRLMKNSVC…NNNGKNYALV (109 aa)).

As to quaternary structure, interacts with PPP1CC catalytic subunit of PP1 and associates with glycogen. Forms complexes with glycogen phosphorylase, glycogen synthase and phosphorylase kinase which is necessary for its regulation of PP1 activity. As to expression, ubiquitously expressed in the examined tissues including brain, muscle, liver and spleen under normoxic condition. Its expression is higher in insulin sensitive tissues (liver and muscle) than in the brain and spleen. Significantly increased expression in the liver and muscle under short-term (1-12 hours) hypoxia exposure. Significantly increased expression after long-term (natural) hypoxia exposure in liver and spleen. No significant differences in expression in brain for any time periods.

Its function is as follows. Acts as a glycogen-targeting subunit for PP1 and regulates its activity. Activates glycogen synthase, reduces glycogen phosphorylase activity and limits glycogen breakdown. This Clarias batrachus (Walking catfish) protein is Protein phosphatase 1 regulatory subunit 3C.